A 124-amino-acid chain; its full sequence is Putative iron-sulfur cluster insertion protein ErpA (124 aa).

Residues C49, C113, and C115 each contribute to the iron-sulfur cluster site.

This sequence belongs to the HesB/IscA family. Homodimer. It depends on iron-sulfur cluster as a cofactor.

Functionally, required for insertion of 4Fe-4S clusters. This is Putative iron-sulfur cluster insertion protein ErpA from Acidovorax sp. (strain JS42).